We begin with the raw amino-acid sequence, 158 residues long: Cytochrome b562 (158 aa).

The next 4 membrane-spanning stretches (helical) occupy residues 12–32 (ITLH…GETM), 46–66 (AGVG…LTLV), 87–107 (VAAG…ALGM), and 121–141 (HVLA…SALF). Residues H15 and H53 each coordinate heme b. Positions 121 and 135 each coordinate heme b.

It belongs to the cytochrome b561 family. In terms of assembly, homodimer. Requires heme b as cofactor.

The protein localises to the cell membrane. Cytochrome b562 is an integral component of the cytochrome b-c1 complex in the cyclic electron transfer system of photosynthetic bacteria. The polypeptide is Cytochrome b562 (Cereibacter sphaeroides (strain ATCC 17023 / DSM 158 / JCM 6121 / CCUG 31486 / LMG 2827 / NBRC 12203 / NCIMB 8253 / ATH 2.4.1.) (Rhodobacter sphaeroides)).